Reading from the N-terminus, the 194-residue chain is Granulocyte colony-stimulating factor (194 aa).

An N-terminal signal peptide occupies residues 1–20 (KLMALQLLLWHSALWMVQEA). 2 disulfide bridges follow: cysteine 56-cysteine 62 and cysteine 84-cysteine 94. The O-linked (GalNAc...) threonine glycan is linked to threonine 153.

The protein belongs to the IL-6 superfamily. As to quaternary structure, monomer. In terms of processing, O-glycosylated.

The protein localises to the secreted. In terms of biological role, granulocyte/macrophage colony-stimulating factors are cytokines that act in hematopoiesis by controlling the production, differentiation, and function of 2 related white cell populations of the blood, the granulocytes and the monocytes-macrophages. This CSF induces granulocytes. The sequence is that of Granulocyte colony-stimulating factor (CSF3) from Felis catus (Cat).